The primary structure comprises 422 residues: Keratin, type I cytoskeletal 23 (422 aa).

Polar residues predominate over residues 1–13; that stretch reads MNSGHSFSQTPSA. Residues 1 to 71 form a head region; that stretch reads MNSGHSFSQT…GRSSPLLGGN (71 aa). A disordered region spans residues 1-73; it reads MNSGHSFSQT…SSPLLGGNGK (73 aa). The segment at 72–107 is coil 1A; it reads GKATMQNLNDRLASYLEKVRALEEANMKLESRILKW. The IF rod domain maps to 72–382; sequence GKATMQNLND…RLLEGESEGT (311 aa). Residues 108–125 form a linker 1 region; that stretch reads HQQRDPGSKKDYSQYEEN. The coil 1B stretch occupies residues 126 to 217; it reads ITHLQEQIVD…KHHEQEMEKH (92 aa). The linker 12 stretch occupies residues 218-240; it reads HVPSDFNVNVKVDTGPREDLIKV. The coil 2 stretch occupies residues 241–378; sequence LEDMRQEYEL…TTYRRLLEGE (138 aa). Positions 379–422 are rod-like helical tail; that stretch reads SEGTREESKSSMKVSATPKIKAITQETINGRLVLCQVNEIQKHA.

It belongs to the intermediate filament family. In terms of assembly, heterotetramer of two type I and two type II keratins.

In Homo sapiens (Human), this protein is Keratin, type I cytoskeletal 23 (KRT23).